A 388-amino-acid chain; its full sequence is MTRSVWLKADSEVGDWETRKRRITAGIEAGVDWVLVDEEDVDRVSELGEINIAAFTNGDVHVMEAEAEDSEADATIVGKDGEGDGTVDLPSDFSGSADLSTLRQNGAAPDGGYVRIFDEDYEAFAEAVAAEADFTIVIGENWQIIPLENLIARVGEETDLIAGVRTAEDARTAYETLELGADGVLLDTDEVDEIRKTVEVRDEMGRESLDLEYAEVTAIEQTGSADRVCIDTGSLMEHDEGMLVGSMARGLFFVHAETAESPYVASRPFRVNAGAVHAYVRTPDGGTKYLSELQSGDEVQIVDANGRTREAIVGRAKIEKRPMFRVQAETEDSDRIETLLQNAETIKVHTQDGRTAVTDLEPGDEILIHHEDTATHFGERIEESIIEK.

Belongs to the archaeal-type DHQ synthase family.

The catalysed reaction is 2-amino-2,3,7-trideoxy-D-lyxo-hept-6-ulosonate + NAD(+) + H2O = 3-dehydroquinate + NH4(+) + NADH + H(+). Catalyzes the oxidative deamination and cyclization of 2-amino-3,7-dideoxy-D-threo-hept-6-ulosonic acid (ADH) to yield 3-dehydroquinate (DHQ), which is fed into the canonical shikimic pathway of aromatic amino acid biosynthesis. The polypeptide is 3-dehydroquinate synthase (Haloarcula marismortui (strain ATCC 43049 / DSM 3752 / JCM 8966 / VKM B-1809) (Halobacterium marismortui)).